A 226-amino-acid polypeptide reads, in one-letter code: MGITRNLILGLACLAFVSIAKALPHEPELGSARVVFQTSYGDIEFGFYPTVAPKTVDHIFKLVRLGGYNTNHFFRVDKGFVAQVADVASGRSAPMNEEQRKEAEKKIVGEFSDVKHVRGTLSMGRYDDPNSAQSSFSMLLGNAPHLDRQYAVFGKVTKGDETLSKLEEVPTRREGIFVMPTERITILSTYYYDTKMESCEEERSVLKRRLQASFVEVERQRMKCFP.

A signal peptide spans 1-22 (MGITRNLILGLACLAFVSIAKA). A PPIase cyclophilin-type domain is found at 34–191 (VVFQTSYGDI…ERITILSTYY (158 aa)).

The protein belongs to the cyclophilin-type PPIase family. As to expression, ubiquitous. Lower expression in roots.

It localises to the endoplasmic reticulum. The catalysed reaction is [protein]-peptidylproline (omega=180) = [protein]-peptidylproline (omega=0). Its function is as follows. PPIases accelerate the folding of proteins. It catalyzes the cis-trans isomerization of proline imidic peptide bonds in oligopeptides. This chain is Peptidyl-prolyl cis-trans isomerase CYP23 (CYP23), found in Arabidopsis thaliana (Mouse-ear cress).